The primary structure comprises 278 residues: Undecaprenyl-diphosphatase 2 (278 aa).

7 helical membrane passes run 1–21 (MSII…FLPI), 38–58 (FPGF…VILY), 85–105 (FMFA…GLLL), 118–138 (FIAG…RFFV), 191–211 (SFLL…GDLL), 223–243 (PLII…IWLI), and 251–271 (LIYF…YFDH).

It belongs to the UppP family.

It is found in the cell membrane. The enzyme catalyses di-trans,octa-cis-undecaprenyl diphosphate + H2O = di-trans,octa-cis-undecaprenyl phosphate + phosphate + H(+). Catalyzes the dephosphorylation of undecaprenyl diphosphate (UPP). Confers resistance to bacitracin. The sequence is that of Undecaprenyl-diphosphatase 2 from Halalkalibacterium halodurans (strain ATCC BAA-125 / DSM 18197 / FERM 7344 / JCM 9153 / C-125) (Bacillus halodurans).